A 312-amino-acid polypeptide reads, in one-letter code: Malate dehydrogenase (312 aa).

NAD(+) is bound by residues 7 to 13 and Asp-34; that span reads GAAGGIG. The substrate site is built by Arg-81 and Arg-87. NAD(+) is bound by residues Asn-94 and 117–119; that span reads ITN. Substrate contacts are provided by Asn-119 and Arg-153. The Proton acceptor role is filled by His-177. Met-227 provides a ligand contact to NAD(+).

It belongs to the LDH/MDH superfamily. MDH type 1 family. As to quaternary structure, homodimer.

It carries out the reaction (S)-malate + NAD(+) = oxaloacetate + NADH + H(+). Functionally, catalyzes the reversible oxidation of malate to oxaloacetate. This Escherichia fergusonii (strain ATCC 35469 / DSM 13698 / CCUG 18766 / IAM 14443 / JCM 21226 / LMG 7866 / NBRC 102419 / NCTC 12128 / CDC 0568-73) protein is Malate dehydrogenase.